The sequence spans 226 residues: Ribosomal RNA small subunit methyltransferase G (226 aa).

S-adenosyl-L-methionine contacts are provided by residues G86, L91, 137–138, and R150; that span reads VE.

It belongs to the methyltransferase superfamily. RNA methyltransferase RsmG family.

It is found in the cytoplasm. The catalysed reaction is guanosine(527) in 16S rRNA + S-adenosyl-L-methionine = N(7)-methylguanosine(527) in 16S rRNA + S-adenosyl-L-homocysteine. Specifically methylates the N7 position of guanine in position 527 of 16S rRNA. This Polaromonas sp. (strain JS666 / ATCC BAA-500) protein is Ribosomal RNA small subunit methyltransferase G.